A 45-amino-acid chain; its full sequence is MTKRTFGGTSRKRKRVSGFRVRMRNHTGRRVIRSRRKRGRARLAV.

The protein belongs to the bacterial ribosomal protein bL34 family.

This is Large ribosomal subunit protein bL34 from Prochlorococcus marinus (strain MIT 9313).